The chain runs to 557 residues: Polypyrimidine tract-binding protein 1 (557 aa).

M1 is modified (N-acetylmethionine). Phosphoserine is present on S16. RRM domains are found at residues R59–N143, L184–L260, and S363–H437. K65 participates in a covalent cross-link: Glycyl lysine isopeptide (Lys-Gly) (interchain with G-Cter in SUMO2). Y127 is subject to Phosphotyrosine. Residue T138 is modified to Phosphothreonine. The residue at position 141 (S141) is a Phosphoserine. Residue K218 forms a Glycyl lysine isopeptide (Lys-Gly) (interchain with G-Cter in SUMO2) linkage. At S459 the chain carries Phosphoserine. An RRM 4 domain is found at A480–S555.

In terms of assembly, monomer. Part of a ternary complex containing KHSRP, PTBP1, PTBP2 and HNRPH1. Interacts with RAVER1 and SFPQ.

Its subcellular location is the nucleus. Functionally, plays a role in pre-mRNA splicing and in the regulation of alternative splicing events. Activates exon skipping of its own pre-mRNA during muscle cell differentiation. Binds to the polypyrimidine tract of introns. May promote RNA looping when bound to two separate polypyrimidine tracts in the same pre-mRNA. May promote the binding of U2 snRNP to pre-mRNA. Cooperates with RAVER1 to modulate switching between mutually exclusive exons during maturation of the TPM1 pre-mRNA. Represses the splicing of MAPT/Tau exon 10. Binds to polypyrimidine-rich controlling element (PCE) of CFTR and promotes exon skipping of CFTR exon 9, thereby antagonizing TIA1 and its role in exon inclusion of CFTR exon 9. Plays a role in the splicing of pyruvate kinase PKM by binding repressively to a polypyrimidine tract flanking PKM exon 9, inhibiting exon 9 inclusion and resulting in exon 10 inclusion and production of the PKM M2 isoform. This is Polypyrimidine tract-binding protein 1 (PTBP1) from Sus scrofa (Pig).